We begin with the raw amino-acid sequence, 240 residues long: Ribonuclease PH (240 aa).

Residues Arg87 and 125–127 (GTR) each bind phosphate.

It belongs to the RNase PH family. As to quaternary structure, homohexameric ring arranged as a trimer of dimers.

It carries out the reaction tRNA(n+1) + phosphate = tRNA(n) + a ribonucleoside 5'-diphosphate. Its function is as follows. Phosphorolytic 3'-5' exoribonuclease that plays an important role in tRNA 3'-end maturation. Removes nucleotide residues following the 3'-CCA terminus of tRNAs; can also add nucleotides to the ends of RNA molecules by using nucleoside diphosphates as substrates, but this may not be physiologically important. Probably plays a role in initiation of 16S rRNA degradation (leading to ribosome degradation) during starvation. The chain is Ribonuclease PH from Crocosphaera subtropica (strain ATCC 51142 / BH68) (Cyanothece sp. (strain ATCC 51142)).